The sequence spans 220 residues: Protein GrpE (220 aa).

A disordered region spans residues Met-1 to Ser-22.

The protein belongs to the GrpE family. In terms of assembly, homodimer.

The protein resides in the cytoplasm. Participates actively in the response to hyperosmotic and heat shock by preventing the aggregation of stress-denatured proteins, in association with DnaK and GrpE. It is the nucleotide exchange factor for DnaK and may function as a thermosensor. Unfolded proteins bind initially to DnaJ; upon interaction with the DnaJ-bound protein, DnaK hydrolyzes its bound ATP, resulting in the formation of a stable complex. GrpE releases ADP from DnaK; ATP binding to DnaK triggers the release of the substrate protein, thus completing the reaction cycle. Several rounds of ATP-dependent interactions between DnaJ, DnaK and GrpE are required for fully efficient folding. This chain is Protein GrpE, found in Bartonella henselae (strain ATCC 49882 / DSM 28221 / CCUG 30454 / Houston 1) (Rochalimaea henselae).